A 427-amino-acid polypeptide reads, in one-letter code: Glutamate-1-semialdehyde 2,1-aminomutase (427 aa).

N6-(pyridoxal phosphate)lysine is present on K265.

This sequence belongs to the class-III pyridoxal-phosphate-dependent aminotransferase family. HemL subfamily. Homodimer. Pyridoxal 5'-phosphate serves as cofactor.

It is found in the cytoplasm. The enzyme catalyses (S)-4-amino-5-oxopentanoate = 5-aminolevulinate. It participates in porphyrin-containing compound metabolism; protoporphyrin-IX biosynthesis; 5-aminolevulinate from L-glutamyl-tRNA(Glu): step 2/2. This is Glutamate-1-semialdehyde 2,1-aminomutase from Burkholderia multivorans (strain ATCC 17616 / 249).